The sequence spans 100 residues: Acylphosphatase (100 aa).

Positions 14–100 constitute an Acylphosphatase-like domain; that stretch reads RLSAWVHGHV…RGDLTGFEER (87 aa). Residues Arg29 and Asn47 contribute to the active site.

Belongs to the acylphosphatase family.

The enzyme catalyses an acyl phosphate + H2O = a carboxylate + phosphate + H(+). This is Acylphosphatase (acyP) from Nocardia farcinica (strain IFM 10152).